A 160-amino-acid chain; its full sequence is Cytochrome b6-f complex subunit 4 (160 aa).

3 consecutive transmembrane segments (helical) span residues 36 to 56 (LLYI…GLAV), 95 to 115 (LLGV…PFLE), and 131 to 151 (TVFL…TLPI).

This sequence belongs to the cytochrome b family. PetD subfamily. In terms of assembly, the 4 large subunits of the cytochrome b6-f complex are cytochrome b6, subunit IV (17 kDa polypeptide, petD), cytochrome f and the Rieske protein, while the 4 small subunits are petG, petL, petM and petN. The complex functions as a dimer.

It is found in the plastid. The protein resides in the chloroplast thylakoid membrane. Component of the cytochrome b6-f complex, which mediates electron transfer between photosystem II (PSII) and photosystem I (PSI), cyclic electron flow around PSI, and state transitions. This is Cytochrome b6-f complex subunit 4 from Oryza nivara (Indian wild rice).